The chain runs to 336 residues: Probable allantoicase (336 aa).

This sequence belongs to the allantoicase family.

The enzyme catalyses allantoate + H2O = (S)-ureidoglycolate + urea. It functions in the pathway nitrogen metabolism; (S)-allantoin degradation; (S)-ureidoglycolate from allantoate (aminidohydrolase route): step 1/1. The polypeptide is Probable allantoicase (Ralstonia nicotianae (strain ATCC BAA-1114 / GMI1000) (Ralstonia solanacearum)).